A 469-amino-acid chain; its full sequence is Glutamate--tRNA ligase (469 aa).

Positions 11-21 match the 'HIGH' region motif; that stretch reads PSPTGFIHLGN. Positions 118–131 are enriched in basic and acidic residues; it reads GEKPRYDGTWRPEP. Residues 118–139 form a disordered region; that stretch reads GEKPRYDGTWRPEPGKVLPEPP. The short motif at 243–247 is the 'KMSKS' region element; it reads KMSKR. Lys246 is a binding site for ATP.

This sequence belongs to the class-I aminoacyl-tRNA synthetase family. Glutamate--tRNA ligase type 1 subfamily. Monomer.

It is found in the cytoplasm. It catalyses the reaction tRNA(Glu) + L-glutamate + ATP = L-glutamyl-tRNA(Glu) + AMP + diphosphate. In terms of biological role, catalyzes the attachment of glutamate to tRNA(Glu) in a two-step reaction: glutamate is first activated by ATP to form Glu-AMP and then transferred to the acceptor end of tRNA(Glu). The polypeptide is Glutamate--tRNA ligase (Burkholderia mallei (strain NCTC 10247)).